The chain runs to 528 residues: Bifunctional purine biosynthesis protein PurH (528 aa).

The MGS-like domain occupies 2–149 (TDLAPLRRAL…KNHGFVSVVV (148 aa)).

Belongs to the PurH family.

It carries out the reaction (6R)-10-formyltetrahydrofolate + 5-amino-1-(5-phospho-beta-D-ribosyl)imidazole-4-carboxamide = 5-formamido-1-(5-phospho-D-ribosyl)imidazole-4-carboxamide + (6S)-5,6,7,8-tetrahydrofolate. The catalysed reaction is IMP + H2O = 5-formamido-1-(5-phospho-D-ribosyl)imidazole-4-carboxamide. It participates in purine metabolism; IMP biosynthesis via de novo pathway; 5-formamido-1-(5-phospho-D-ribosyl)imidazole-4-carboxamide from 5-amino-1-(5-phospho-D-ribosyl)imidazole-4-carboxamide (10-formyl THF route): step 1/1. The protein operates within purine metabolism; IMP biosynthesis via de novo pathway; IMP from 5-formamido-1-(5-phospho-D-ribosyl)imidazole-4-carboxamide: step 1/1. The polypeptide is Bifunctional purine biosynthesis protein PurH (Roseobacter denitrificans (strain ATCC 33942 / OCh 114) (Erythrobacter sp. (strain OCh 114))).